The sequence spans 278 residues: Dermonecrotic toxin LspiSicTox-betaIE2ii (278 aa).

His-5 is a catalytic residue. Residues Glu-25 and Asp-27 each coordinate Mg(2+). The active-site Nucleophile is the His-41. Disulfide bonds link Cys-45–Cys-51 and Cys-47–Cys-190. Residue Asp-85 coordinates Mg(2+).

It belongs to the arthropod phospholipase D family. Class II subfamily. Mg(2+) serves as cofactor. As to expression, expressed by the venom gland.

It localises to the secreted. It carries out the reaction an N-(acyl)-sphingosylphosphocholine = an N-(acyl)-sphingosyl-1,3-cyclic phosphate + choline. It catalyses the reaction an N-(acyl)-sphingosylphosphoethanolamine = an N-(acyl)-sphingosyl-1,3-cyclic phosphate + ethanolamine. The enzyme catalyses a 1-acyl-sn-glycero-3-phosphocholine = a 1-acyl-sn-glycero-2,3-cyclic phosphate + choline. The catalysed reaction is a 1-acyl-sn-glycero-3-phosphoethanolamine = a 1-acyl-sn-glycero-2,3-cyclic phosphate + ethanolamine. Its function is as follows. Dermonecrotic toxins cleave the phosphodiester linkage between the phosphate and headgroup of certain phospholipids (sphingolipid and lysolipid substrates), forming an alcohol (often choline) and a cyclic phosphate. This toxin acts on sphingomyelin (SM). It may also act on ceramide phosphoethanolamine (CPE), lysophosphatidylcholine (LPC) and lysophosphatidylethanolamine (LPE), but not on lysophosphatidylserine (LPS), and lysophosphatidylglycerol (LPG). It acts by transphosphatidylation, releasing exclusively cyclic phosphate products as second products. Induces dermonecrosis, hemolysis, increased vascular permeability, edema, inflammatory response, and platelet aggregation. The protein is Dermonecrotic toxin LspiSicTox-betaIE2ii of Loxosceles spinulosa (Recluse spider).